A 138-amino-acid chain; its full sequence is ATP synthase epsilon chain (138 aa).

It belongs to the ATPase epsilon chain family. F-type ATPases have 2 components, CF(1) - the catalytic core - and CF(0) - the membrane proton channel. CF(1) has five subunits: alpha(3), beta(3), gamma(1), delta(1), epsilon(1). CF(0) has three main subunits: a, b and c.

The protein localises to the cell inner membrane. Its function is as follows. Produces ATP from ADP in the presence of a proton gradient across the membrane. This Polaromonas naphthalenivorans (strain CJ2) protein is ATP synthase epsilon chain.